The sequence spans 104 residues: Zinc finger C2H2 protein ECU02_0310 (104 aa).

The C2H2-type zinc-finger motif lies at 56–80; that stretch reads FYCCECDRHFITEKVLMEHKRSNPH.

It belongs to the ZNF593/BUD20 C2H2-type zinc-finger protein family. Associates with pre-60S ribosomal particles; released from the pre-60S particle very early in the cytoplasm.

It localises to the nucleus. The protein localises to the cytoplasm. Its function is as follows. Involved in pre-60S ribosomal particles maturation by promoting the nuclear export of the 60S ribosome. This is Zinc finger C2H2 protein ECU02_0310 from Encephalitozoon cuniculi (strain GB-M1) (Microsporidian parasite).